The following is a 360-amino-acid chain: Ribosomal RNA large subunit methyltransferase F (360 aa).

The tract at residues 1-36 is disordered; sequence MSKLISKQGKRPALSQSGLAKPSTSKKSSASKNANT. Residues 23–36 show a composition bias toward low complexity; the sequence is STSKKSSASKNANT.

It belongs to the methyltransferase superfamily. METTL16/RlmF family.

It localises to the cytoplasm. It catalyses the reaction adenosine(1618) in 23S rRNA + S-adenosyl-L-methionine = N(6)-methyladenosine(1618) in 23S rRNA + S-adenosyl-L-homocysteine + H(+). Specifically methylates the adenine in position 1618 of 23S rRNA. The sequence is that of Ribosomal RNA large subunit methyltransferase F from Shewanella denitrificans (strain OS217 / ATCC BAA-1090 / DSM 15013).